The sequence spans 348 residues: Ileal sodium/bile acid cotransporter (348 aa).

The Extracellular portion of the chain corresponds to 1-28; that stretch reads MNDPNSCVDNATVCSGASCVVPESNFNN. An N-linked (GlcNAc...) asparagine glycan is attached at Asn-10. A helical membrane pass occupies residues 29-49; sequence ILSVVLSTVLTILLALVMFSM. Over 50–82 the chain is Cytoplasmic; sequence GCNVEIKKFLGHIKRPWGICVGFLCQFGIMPLT. Residues 83–103 traverse the membrane as a helical segment; the sequence is GFILSVAFDILPLQAVVVLII. Residues 104-126 lie on the Extracellular side of the membrane; it reads GCCPGGTASNILAYWVDGDMDLS. The helical transmembrane segment at 127-147 threads the bilayer; it reads VSMTTCSTLLALGMMPLCLLI. Over 148–157 the chain is Cytoplasmic; sequence YTKMWVDSGS. A helical membrane pass occupies residues 158 to 178; sequence IVIPYDNIGTSLVSLVVPVSI. The Extracellular segment spans residues 179–195; sequence GMFVNHKWPQKAKIILK. Residues 196–216 traverse the membrane as a helical segment; it reads IGSIAGAILIVLIAVVGGILY. At 217–224 the chain is on the cytoplasmic side; that stretch reads QSAWIIAP. A helical membrane pass occupies residues 225 to 245; sequence KLWIIGTIFPVAGYSLGFLLA. Over 246–284 the chain is Extracellular; it reads RIAGLPWYRCRTVAFETGMQNTQLCSTIVQLSFTPEELN. Residues 285 to 305 traverse the membrane as a helical segment; sequence VVFTFPLIYSIFQLAFAAIFL. The Cytoplasmic segment spans residues 306–348; that stretch reads GFYVAYKKCHGKNKAEIPESKENGTEPESSFYKANGGFQPDEK. The span at 320 to 329 shows a compositional bias: basic and acidic residues; sequence AEIPESKENG. A disordered region spans residues 320-348; that stretch reads AEIPESKENGTEPESSFYKANGGFQPDEK. Ser-335 is modified (phosphoserine).

This sequence belongs to the bile acid:sodium symporter (BASS) (TC 2.A.28) family. Monomer and homodimer. In terms of tissue distribution, mainly expressed in ileum and kidney, lower expression in cecum.

The protein localises to the membrane. It carries out the reaction taurocholate(out) + 2 Na(+)(out) = taurocholate(in) + 2 Na(+)(in). The catalysed reaction is cholate(out) + 2 Na(+)(out) = cholate(in) + 2 Na(+)(in). It catalyses the reaction taurochenodeoxycholate(out) + 2 Na(+)(out) = taurochenodeoxycholate(in) + 2 Na(+)(in). The enzyme catalyses tauroursodeoxycholate(out) + 2 Na(+)(out) = tauroursodeoxycholate(in) + 2 Na(+)(in). It carries out the reaction glycocholate(out) + 2 Na(+)(out) = glycocholate(in) + 2 Na(+)(in). The catalysed reaction is tauronorcholate(out) + 2 Na(+)(out) = tauronorcholate(in) + 2 Na(+)(in). It catalyses the reaction tauroallocholate(out) + 2 Na(+)(out) = tauroallocholate(in) + 2 Na(+)(in). The enzyme catalyses taurodeoxycholate(out) + 2 Na(+)(out) = taurodeoxycholate(in) + 2 Na(+)(in). It carries out the reaction tauro-beta-muricholate(out) + 2 Na(+)(out) = tauro-beta-muricholate(in) + 2 Na(+)(in). Its function is as follows. Plays a critical role in the sodium-dependent reabsorption of bile acids from the lumen of the small intestine. Transports various bile acids, unconjugated or conjugated, such as cholate and taurocholate. Also responsible for bile acid transport in the renal proximal tubules, a salvage mechanism that helps conserve bile acids. Works collaboratively with the Na(+)-taurocholate cotransporting polypeptide (NTCP), the organic solute transporter (OST), and the bile salt export pump (BSEP), to ensure efficacious biological recycling of bile acids during enterohepatic circulation. This chain is Ileal sodium/bile acid cotransporter (SLC10A2), found in Homo sapiens (Human).